The chain runs to 242 residues: Small ribosomal subunit protein uS2 (242 aa).

It belongs to the universal ribosomal protein uS2 family.

This is Small ribosomal subunit protein uS2 from Vibrio parahaemolyticus serotype O3:K6 (strain RIMD 2210633).